Consider the following 499-residue polypeptide: Centrosomal protein of 57 kDa (499 aa).

The span at Met1–Ser16 shows a compositional bias: low complexity. Positions Met1 to Pro41 are disordered. Polar residues predominate over residues Ser22–Pro35. Ser53 is subject to Phosphoserine. Residues Thr58–Glu239 form a centrosome localization domain (CLD) region. The stretch at Glu63–Arg242 forms a coiled coil. Disordered stretches follow at residues Thr255–Asn275 and Leu424–Asn476. The interval Gly278–Leu490 is mediates interaction with microtubules. Positions Pro388 to Gln491 form a coiled coil. Residues Gln427–Asp443 are compositionally biased toward basic and acidic residues. A compositionally biased stretch (low complexity) spans Ser448–Thr458. Residues Ser460–Arg474 show a composition bias toward basic and acidic residues.

It belongs to the translokin family. In terms of assembly, homodimer and homooligomer. Interacts with FGF2 and RAP80. Does not interact with FGF1 or FGF2 isoform 24 kDa. Interacts with microtubules. Ubiquitous (at protein level).

It localises to the nucleus. The protein localises to the cytoplasm. It is found in the cytoskeleton. Its subcellular location is the microtubule organizing center. The protein resides in the centrosome. Its function is as follows. Centrosomal protein which may be required for microtubule attachment to centrosomes. May act by forming ring-like structures around microtubules. Mediates nuclear translocation and mitogenic activity of the internalized growth factor FGF2. The polypeptide is Centrosomal protein of 57 kDa (Cep57) (Rattus norvegicus (Rat)).